Reading from the N-terminus, the 126-residue chain is Small ribosomal subunit protein uS12 (126 aa).

The disordered stretch occupies residues 1–28; it reads MPTIQQLIRSERSKVQKKTKSPALKQCP. At aspartate 89 the chain carries 3-methylthioaspartic acid. Residues 104 to 126 form a disordered region; the sequence is ATGVKDRKQGRSKYGTKREKAKK. Residues 113 to 126 are compositionally biased toward basic residues; it reads GRSKYGTKREKAKK.

It belongs to the universal ribosomal protein uS12 family. Part of the 30S ribosomal subunit. Contacts proteins S8 and S17. May interact with IF1 in the 30S initiation complex.

Functionally, with S4 and S5 plays an important role in translational accuracy. Interacts with and stabilizes bases of the 16S rRNA that are involved in tRNA selection in the A site and with the mRNA backbone. Located at the interface of the 30S and 50S subunits, it traverses the body of the 30S subunit contacting proteins on the other side and probably holding the rRNA structure together. The combined cluster of proteins S8, S12 and S17 appears to hold together the shoulder and platform of the 30S subunit. In Synechocystis sp. (strain ATCC 27184 / PCC 6803 / Kazusa), this protein is Small ribosomal subunit protein uS12.